The primary structure comprises 269 residues: Tryptophan synthase alpha chain (269 aa).

Residues glutamate 49 and aspartate 60 each act as proton acceptor in the active site.

It belongs to the TrpA family. As to quaternary structure, tetramer of two alpha and two beta chains.

It carries out the reaction (1S,2R)-1-C-(indol-3-yl)glycerol 3-phosphate + L-serine = D-glyceraldehyde 3-phosphate + L-tryptophan + H2O. It functions in the pathway amino-acid biosynthesis; L-tryptophan biosynthesis; L-tryptophan from chorismate: step 5/5. In terms of biological role, the alpha subunit is responsible for the aldol cleavage of indoleglycerol phosphate to indole and glyceraldehyde 3-phosphate. The polypeptide is Tryptophan synthase alpha chain (Cronobacter sakazakii (strain ATCC BAA-894) (Enterobacter sakazakii)).